A 267-amino-acid polypeptide reads, in one-letter code: 3-methyl-2-oxobutanoate hydroxymethyltransferase (267 aa).

2 residues coordinate Mg(2+): Asp46 and Asp85. 3-methyl-2-oxobutanoate is bound by residues 46 to 47, Asp85, and Lys115; that span reads DS. Position 117 (Glu117) interacts with Mg(2+). Glu184 functions as the Proton acceptor in the catalytic mechanism.

It belongs to the PanB family. As to quaternary structure, homodecamer; pentamer of dimers. It depends on Mg(2+) as a cofactor.

The protein localises to the cytoplasm. It carries out the reaction 3-methyl-2-oxobutanoate + (6R)-5,10-methylene-5,6,7,8-tetrahydrofolate + H2O = 2-dehydropantoate + (6S)-5,6,7,8-tetrahydrofolate. It functions in the pathway cofactor biosynthesis; (R)-pantothenate biosynthesis; (R)-pantoate from 3-methyl-2-oxobutanoate: step 1/2. Its function is as follows. Catalyzes the reversible reaction in which hydroxymethyl group from 5,10-methylenetetrahydrofolate is transferred onto alpha-ketoisovalerate to form ketopantoate. This chain is 3-methyl-2-oxobutanoate hydroxymethyltransferase, found in Geobacter sulfurreducens (strain ATCC 51573 / DSM 12127 / PCA).